The sequence spans 102 residues: MNAIPMEHGLALSGVLFSLGLIGLMVRRNILFVLMSLEVMMNAAALAFVVAGSRWAQADGQIMFILVITLAAAEASIGLAILLQLHRRFHTLDIDAASEMRG.

A run of 3 helical transmembrane segments spans residues 6 to 26, 30 to 50, and 62 to 82; these read MEHG…GLMV, ILFV…AFVV, and IMFI…LAIL.

This sequence belongs to the complex I subunit 4L family. In terms of assembly, NDH-1 is composed of 13 different subunits. Subunits NuoA, H, J, K, L, M, N constitute the membrane sector of the complex.

The protein resides in the cell inner membrane. The enzyme catalyses a quinone + NADH + 5 H(+)(in) = a quinol + NAD(+) + 4 H(+)(out). NDH-1 shuttles electrons from NADH, via FMN and iron-sulfur (Fe-S) centers, to quinones in the respiratory chain. The immediate electron acceptor for the enzyme in this species is believed to be ubiquinone. Couples the redox reaction to proton translocation (for every two electrons transferred, four hydrogen ions are translocated across the cytoplasmic membrane), and thus conserves the redox energy in a proton gradient. The protein is NADH-quinone oxidoreductase subunit K of Azotobacter vinelandii (strain DJ / ATCC BAA-1303).